The primary structure comprises 175 residues: RNA pyrophosphohydrolase (175 aa).

In terms of domain architecture, Nudix hydrolase spans Gly-6–Lys-149. The Nudix box signature appears at Gly-38–Gly-59.

Belongs to the Nudix hydrolase family. RppH subfamily. A divalent metal cation serves as cofactor.

Functionally, accelerates the degradation of transcripts by removing pyrophosphate from the 5'-end of triphosphorylated RNA, leading to a more labile monophosphorylated state that can stimulate subsequent ribonuclease cleavage. The sequence is that of RNA pyrophosphohydrolase from Serratia proteamaculans (strain 568).